The chain runs to 100 residues: NADH-quinone oxidoreductase subunit K (100 aa).

Transmembrane regions (helical) follow at residues 4–24, 28–48, and 60–80; these read LFHG…SLIV, ILFI…ALIV, and IMYI…LALL.

This sequence belongs to the complex I subunit 4L family. As to quaternary structure, NDH-1 is composed of 13 different subunits. Subunits NuoA, H, J, K, L, M, N constitute the membrane sector of the complex.

The protein localises to the cell membrane. The enzyme catalyses a quinone + NADH + 5 H(+)(in) = a quinol + NAD(+) + 4 H(+)(out). Functionally, NDH-1 shuttles electrons from NADH, via FMN and iron-sulfur (Fe-S) centers, to quinones in the respiratory chain. The immediate electron acceptor for the enzyme in this species is believed to be ubiquinone. Couples the redox reaction to proton translocation (for every two electrons transferred, four hydrogen ions are translocated across the cytoplasmic membrane), and thus conserves the redox energy in a proton gradient. The sequence is that of NADH-quinone oxidoreductase subunit K from Buchnera aphidicola subsp. Acyrthosiphon pisum (strain 5A).